Consider the following 421-residue polypeptide: Alpha-tubulin N-acetyltransferase 1 (421 aa).

The N-acetyltransferase domain maps to 1–190; sequence MEFPFDVDAL…NNFVIFEGFF (190 aa). Residue lysine 56 is modified to N6-acetyllysine; by autocatalysis. 124–137 serves as a coordination point for acetyl-CoA; sequence FYIHESVQRHGHGR. Lysine 146 bears the N6-acetyllysine; by autocatalysis mark. 160 to 169 provides a ligand contact to acetyl-CoA; it reads SPKLLKFLNK. Residues 214-235 form a disordered region; that stretch reads PIPAAPARKLPPKRAEGDIKPY. Positions 226-235 are enriched in basic and acidic residues; the sequence is KRAEGDIKPY. N6-acetyllysine; by autocatalysis is present on residues lysine 233 and lysine 244. The segment at 252–284 is disordered; that stretch reads PLNRAPRRATPPAHPPPRSSSLGNSPDRGPLRP. Serine 272 and serine 276 each carry phosphoserine. Arginine 305 carries the asymmetric dimethylarginine modification. Serine 315 bears the Phosphoserine mark. At arginine 323 the chain carries Omega-N-methylarginine. The segment covering 342–351 has biased composition (polar residues); sequence FNTSFLGTGN. The interval 342–398 is disordered; it reads FNTSFLGTGNQERKQGEQEAEDRSASEDQVLLQDGSGEEPTHTVAPRAQAPPAQSWM. Residues 352–367 are compositionally biased toward basic and acidic residues; it reads QERKQGEQEAEDRSAS.

Belongs to the acetyltransferase ATAT1 family. Component of the BBSome complex. Interacts with AP2 alpha-adaptins, including AP2A2, but not with AP1 gamma-adaptin (AP1G1/AP1G2); this interaction is required for efficient alpha-tubulin acetylation, hence clathrin-coated pits are sites of microtubule acetylation. Autoacetylation strongly increases tubulin acetylation.

It is found in the cytoplasm. Its subcellular location is the membrane. It localises to the clathrin-coated pit. The protein localises to the cell junction. The protein resides in the focal adhesion. It is found in the cell projection. Its subcellular location is the axon. It localises to the cytoskeleton. The protein localises to the spindle. The catalysed reaction is L-lysyl-[alpha-tubulin] + acetyl-CoA = N(6)-acetyl-L-lysyl-[alpha-tubulin] + CoA + H(+). Functionally, specifically acetylates 'Lys-40' in alpha-tubulin on the lumenal side of microtubules. Promotes microtubule destabilization and accelerates microtubule dynamics; this activity may be independent of acetylation activity. Acetylates alpha-tubulin with a slow enzymatic rate, due to a catalytic site that is not optimized for acetyl transfer. Enters the microtubule through each end and diffuses quickly throughout the lumen of microtubules. Acetylates only long/old microtubules because of its slow acetylation rate since it does not have time to act on dynamically unstable microtubules before the enzyme is released. Required for normal sperm flagellar function. Promotes directional cell locomotion and chemotaxis, through AP2A2-dependent acetylation of alpha-tubulin at clathrin-coated pits that are concentrated at the leading edge of migrating cells. May facilitate primary cilium assembly. The chain is Alpha-tubulin N-acetyltransferase 1 from Rattus norvegicus (Rat).